The chain runs to 1345 residues: Aldehyde oxidase 2 (1345 aa).

One can recognise a 2Fe-2S ferredoxin-type domain in the interval 9–96; sequence DDLEFFVNGR…GAAVTTVEGV (88 aa). Residues Cys48, Cys53, Cys56, and Cys78 each coordinate [2Fe-2S] cluster. Gln117 serves as a coordination point for Mo-molybdopterin. Positions 118, 121, 153, and 155 each coordinate [2Fe-2S] cluster. Cys155 lines the Mo-molybdopterin pocket. The FAD-binding PCMH-type domain occupies 238-423; the sequence is FYGERITWIA…GSVYIPHSQK (186 aa). Residues 266–273, Ala347, Ser356, His360, Asp369, and Leu413 each bind FAD; that span reads LISGNTAL. Mo-molybdopterin contacts are provided by residues 812–813, 1094–1097, Gln1209, and Leu1274; these read GF and ASVG. The active-site Proton acceptor; for azaheterocycle hydroxylase activity is Glu1276.

It belongs to the xanthine dehydrogenase family. As to quaternary structure, homodimer. Requires [2Fe-2S] cluster as cofactor. The cofactor is FAD. It depends on Mo-molybdopterin as a cofactor. As to expression, expressed in olfactory mucosa epithelium (at protein level). Detected in skin.

The protein resides in the cytoplasm. It catalyses the reaction an aldehyde + O2 + H2O = a carboxylate + H2O2 + H(+). In terms of biological role, oxidase with broad substrate specificity, oxidizing aromatic azaheterocycles, such as phthalazine, as well as aldehydes, such as benzaldehyde and retinal. Cannot use hypoxanthine as substrate. This Mus musculus (Mouse) protein is Aldehyde oxidase 2 (Aox2).